The following is a 521-amino-acid chain: Cytochrome P450 monooxygenase bet2 (521 aa).

Residues 23 to 43 (SNWRFALFVAATLLTSYIVIV) form a helical membrane-spanning segment. The N-linked (GlcNAc...) asparagine glycan is linked to Asn-188. Cys-461 serves as a coordination point for heme.

It belongs to the cytochrome P450 family. Heme is required as a cofactor.

Its subcellular location is the membrane. It carries out the reaction dehydroprobetaenone I + NADPH + O2 + H(+) = epoxybetaenone + NADP(+) + H2O. The enzyme catalyses dehydroprobetaenone I + 3 NADPH + 3 O2 + 3 H(+) = betaenone C + 3 NADP(+) + 3 H2O. It participates in mycotoxin biosynthesis. Its function is as follows. Cytochrome P450 monooxygenase; part of the gene cluster that mediates the biosynthesis of betaenones, phytotoxic polyketides involved in leaf spot disease in sugar beets. The first step of the pathway is the synthesis of dehydroprobetaenone I by the polyketide synthase bet1 and the enoyl reductase bet3 via condensation of one acetyl-CoA starter unit with 7 malonyl-CoA units and 5 methylations. The C-terminal reductase (R) domain of bet1 catalyzes the reductive release of the polyketide chain. Because bet1 lacks a designated enoylreductase (ER) domain, the required activity is provided the enoyl reductase bet3. The short-chain dehydrogenase/reductase bet4 then catalyzes reduction of dehydroprobetaenone I to probetaenone I. The cytochrome P450 monooxygenase bet2 catalyzes successive epoxidation, oxidation (resulting from epoxide opening) and hydroxylation to install a tertiary alcohol in the decaline ring to yield betaenone C from dehydroprobetaenone I and betaenone B from probetaenone I. The FAD-linked oxidoreductase (orf1) is probably responsible for the conversion of betaenone C to betaenone A via an intramolecular aldol reaction between C-1 and C-17 to form the bridged tricyclic system in betaenone A. In Neocamarosporium betae (Beet black rot fungus), this protein is Cytochrome P450 monooxygenase bet2.